The following is a 149-amino-acid chain: Calmodulin-3 (149 aa).

An N-acetylalanine modification is found at A2. EF-hand domains are found at residues D8–N43, P44–D79, D81–K116, and L117–K149. D21, D23, D25, C27, E32, D57, D59, N61, T63, E68, D94, D96, N98, and E105 together coordinate Ca(2+). K116 is subject to N6,N6,N6-trimethyllysine. Ca(2+)-binding residues include D130, D132, D134, Q136, and E141.

Belongs to the calmodulin family.

Its function is as follows. Calmodulin mediates the control of a large number of enzymes, ion channels and other proteins by Ca(2+). Among the enzymes to be stimulated by the calmodulin-Ca(2+) complex are a number of protein kinases and phosphatases. In Oryza sativa subsp. japonica (Rice), this protein is Calmodulin-3 (CAM3).